A 96-amino-acid chain; its full sequence is MNIRPLHDRVIVERQEVESKSAGGIVLTGSAAEKSTRGVVLAVGKGRILENGTVQELDVKVGDTVIFAEGYGTKSEKIDGKEVLIMSENDIMAIVE.

It belongs to the GroES chaperonin family. In terms of assembly, heptamer of 7 subunits arranged in a ring. Interacts with the chaperonin GroEL.

Its subcellular location is the cytoplasm. In terms of biological role, together with the chaperonin GroEL, plays an essential role in assisting protein folding. The GroEL-GroES system forms a nano-cage that allows encapsulation of the non-native substrate proteins and provides a physical environment optimized to promote and accelerate protein folding. GroES binds to the apical surface of the GroEL ring, thereby capping the opening of the GroEL channel. The chain is Co-chaperonin GroES from Photobacterium profundum (strain SS9).